We begin with the raw amino-acid sequence, 127 residues long: S-adenosylmethionine decarboxylase proenzyme 2 (127 aa).

The Schiff-base intermediate with substrate; via pyruvic acid role is filled by S63. Pyruvic acid (Ser); by autocatalysis is present on S63. The active-site Proton acceptor; for processing activity is the H68. C83 acts as the Proton donor; for catalytic activity in catalysis.

This sequence belongs to the prokaryotic AdoMetDC family. Type 1 subfamily. As to quaternary structure, heterotetramer of two alpha and two beta chains arranged as a dimer of alpha/beta heterodimers. It depends on pyruvate as a cofactor. In terms of processing, is synthesized initially as an inactive proenzyme. Formation of the active enzyme involves a self-maturation process in which the active site pyruvoyl group is generated from an internal serine residue via an autocatalytic post-translational modification. Two non-identical subunits are generated from the proenzyme in this reaction, and the pyruvate is formed at the N-terminus of the alpha chain, which is derived from the carboxyl end of the proenzyme. The post-translation cleavage follows an unusual pathway, termed non-hydrolytic serinolysis, in which the side chain hydroxyl group of the serine supplies its oxygen atom to form the C-terminus of the beta chain, while the remainder of the serine residue undergoes an oxidative deamination to produce ammonia and the pyruvoyl group blocking the N-terminus of the alpha chain.

The enzyme catalyses S-adenosyl-L-methionine + H(+) = S-adenosyl 3-(methylsulfanyl)propylamine + CO2. It participates in amine and polyamine biosynthesis; S-adenosylmethioninamine biosynthesis; S-adenosylmethioninamine from S-adenosyl-L-methionine: step 1/1. In terms of biological role, catalyzes the decarboxylation of S-adenosylmethionine to S-adenosylmethioninamine (dcAdoMet), the propylamine donor required for the synthesis of the polyamines spermine and spermidine from the diamine putrescine. The sequence is that of S-adenosylmethionine decarboxylase proenzyme 2 from Halalkalibacterium halodurans (strain ATCC BAA-125 / DSM 18197 / FERM 7344 / JCM 9153 / C-125) (Bacillus halodurans).